A 643-amino-acid chain; its full sequence is MNINPSIIILTINISIIITLLSSVFFFQNETNPSNLNSSSYSLGIFHNTSFNYLFSNSLFFTSLLKTLAILSLFPLFIEIIFNIPDTTVSLFNWLPNNGFSLNVEFRFDLKFNTFLSVALIVSWSILEFSYYYMDNDPNPNNFFRLLIIFLLNMIILTSTNNIFLLFIGWEGVGFLSFLLISWWTSRANANNSAIQAVIYNRVGDIGILLFFSLSITLFNTWSLPEIFSISAPNTFNNLLLVGLLIAAAGKSAQFGLHPWLPAAMEGPTPVFSIRHSSTMVVAGIFLLIRLSPLYACSSNFNTWCLILGSITAIFAATTAISQHDIKKIVAYSTTSQLGLMMVAIGLNQPSIALFHICTHAFFKAMLFLSSGSIIHSLNDEQDIRKMGGLHFILPNTAACIILGSLALSGIPFLPGFYSKDLILEIGLTNFSNFMGIVLSLLATLLTSVYSFRIIFFCFIKNPSFSPLAPINEENNNLTNSLNRLALGTILSGWILTNLTVLVPIITISSVLKTAALLLTITGVLFSISILQELTLNISPPTAYNTNSFTTNQWFYENISHILFLFYSFTISLSLSTRNIDRGWSENIGAQGIAITSSNASQSYQLSQTGYIKQYLLFSFLTLLIIIALSLTTISQLSPSFDI.

Helical transmembrane passes span 7-27 (IIIL…VFFF), 64-84 (LLKT…IFNI), 114-134 (TFLS…YYYM), 140-160 (PNNF…LTST), 163-183 (IFLL…LISW), 208-228 (ILLF…PEIF), 230-250 (ISAP…AAAG), 277-297 (SSTM…LYAC), 301-321 (FNTW…TTAI), 338-358 (LGLM…FHIC), 398-418 (AACI…PGFY), 437-457 (IVLS…IIFF), 486-506 (ALGT…VPII), 511-531 (VLKT…ISIL), 555-575 (FYEN…SLSL), and 615-635 (YLLF…TTIS).

The protein belongs to the complex I subunit 5 family.

The protein localises to the mitochondrion inner membrane. The enzyme catalyses a ubiquinone + NADH + 5 H(+)(in) = a ubiquinol + NAD(+) + 4 H(+)(out). In terms of biological role, core subunit of the mitochondrial membrane respiratory chain NADH dehydrogenase (Complex I) that is believed to belong to the minimal assembly required for catalysis. Complex I functions in the transfer of electrons from NADH to the respiratory chain. The immediate electron acceptor for the enzyme is believed to be ubiquinone. This is NADH-ubiquinone oxidoreductase chain 5 (ND5) from Patiria pectinifera (Starfish).